The chain runs to 81 residues: Cytotoxin 2 (81 aa).

A signal peptide spans 1 to 21 (MKTLLLTLVVVTIVCLDLGYT). 4 disulfide bridges follow: C24–C42, C35–C59, C63–C74, and C75–C80.

This sequence belongs to the three-finger toxin family. Short-chain subfamily. Type IA cytotoxin sub-subfamily. As to quaternary structure, monomer in solution; Homodimer and oligomer in the presence of negatively charged lipids forming a pore with a size ranging between 20 and 30 Angstroms. In terms of tissue distribution, expressed by the venom gland.

It localises to the secreted. It is found in the target cell membrane. Shows cytolytic activity on many different cells by forming pore in lipid membranes. In vivo, increases heart rate or kills the animal by cardiac arrest. In addition, it binds to heparin with high affinity, interacts with Kv channel-interacting protein 1 (KCNIP1) in a calcium-independent manner, and binds to integrin alpha-V/beta-3 (ITGAV/ITGB3) with moderate affinity. The chain is Cytotoxin 2 from Naja kaouthia (Monocled cobra).